A 299-amino-acid polypeptide reads, in one-letter code: Transcription elongation factor A protein 2 (299 aa).

In terms of domain architecture, TFIIS N-terminal spans 5–82; the sequence is EEIARIARRL…KSWKKLLDVS (78 aa). Lysine 57 participates in a covalent cross-link: Glycyl lysine isopeptide (Lys-Gly) (interchain with G-Cter in ubiquitin). 2 positions are modified to phosphoserine: serine 59 and serine 100. The interval 82-127 is disordered; sequence SDGKSRNQGRGTPLPTSSSKDASRTTDLSCKKPDPPRTPSTPRITT. Positions 87–101 are enriched in polar residues; sequence RNQGRGTPLPTSSSK. Positions 102-116 are enriched in basic and acidic residues; sequence DASRTTDLSCKKPDP. The TFIIS central domain occupies 138-254; it reads VRNKCREMLT…EHQMARTGGT (117 aa). The TFIIS-type zinc-finger motif lies at 257–297; that stretch reads DLFTCNKCRKKNCTYTQVQTRSSDEPMTTYVVCNECGNRWK. Zn(2+) is bound by residues cysteine 261, cysteine 264, cysteine 289, and cysteine 292.

This sequence belongs to the TFS-II family. In terms of assembly, interacts with the basal transcription factor GTF2B. Interacts with REXO1. In terms of tissue distribution, testis and ovary specific. Specific to testicular germ cells.

The protein resides in the nucleus. Its function is as follows. Necessary for efficient RNA polymerase II transcription elongation past template-encoded arresting sites. The arresting sites in DNA have the property of trapping a certain fraction of elongating RNA polymerases that pass through, resulting in locked ternary complexes. Cleavage of the nascent transcript by S-II allows the resumption of elongation from the new 3'-terminus. The chain is Transcription elongation factor A protein 2 (Tcea2) from Mus musculus (Mouse).